The sequence spans 327 residues: Methionine import ATP-binding protein MetN (327 aa).

The ABC transporter domain maps to 3–239 (VELKNIEKIY…PKHAVTKELL (237 aa)). 36–43 (GYSGAGKS) is an ATP binding site.

It belongs to the ABC transporter superfamily. Methionine importer (TC 3.A.1.24) family. As to quaternary structure, the complex is composed of two ATP-binding proteins (MetN), two transmembrane proteins (MetI) and a solute-binding protein (MetQ).

It localises to the cell inner membrane. It carries out the reaction L-methionine(out) + ATP + H2O = L-methionine(in) + ADP + phosphate + H(+). It catalyses the reaction D-methionine(out) + ATP + H2O = D-methionine(in) + ADP + phosphate + H(+). Functionally, part of the ABC transporter complex MetNIQ involved in methionine import. Responsible for energy coupling to the transport system. This is Methionine import ATP-binding protein MetN from Helicobacter pylori (strain J99 / ATCC 700824) (Campylobacter pylori J99).